We begin with the raw amino-acid sequence, 749 residues long: Disintegrin and metalloproteinase domain-containing protein 10 (749 aa).

The N-terminal stretch at 1–18 (MGLLRLVFLLSWAASAGG) is a signal peptide. A propeptide spanning residues 19 to 213 (LYGNPLNKYI…SGPVILRKKR (195 aa)) is cleaved from the precursor. At 19–673 (LYGNPLNKYI…NPELYENIAE (655 aa)) the chain is on the extracellular side. A Cysteine switch motif is present at residues 170-177 (GGCADSSV). A Zn(2+)-binding site is contributed by C172. The 238-residue stretch at 220–457 (NTCQLFIQTD…KENSCFVESG (238 aa)) folds into the Peptidase M12B domain. Disulfide bonds link C222–C314, C345–C452, C400–C436, C461–C496, C472–C485, C474–C480, C484–C516, C504–C512, C511–C537, C525–C544, C531–C563, C556–C568, C573–C599, C581–C608, C583–C598, C595–C640, and C633–C646. 2 N-linked (GlcNAc...) asparagine glycosylation sites follow: N268 and N279. H384 is a Zn(2+) binding site. Residue E385 is part of the active site. Zn(2+) is bound by residues H388 and H394. An N-linked (GlcNAc...) asparagine glycan is attached at N440. One can recognise a Disintegrin domain in the interval 458-552 (QPICGNGLVE…QCPPSEPREN (95 aa)). N552 is a glycosylation site (N-linked (GlcNAc...) asparagine). A helical membrane pass occupies residues 674-694 (WIVAHWWAVLLMGIALIMLMA). Residues 695-749 (GFIKICSVHTPSSNPKLPPPKPLPGTLKRRRPPQTTQQPSRQRPRENYQMGHMRH) are Cytoplasmic-facing. The interval 705 to 749 (PSSNPKLPPPKPLPGTLKRRRPPQTTQQPSRQRPRENYQMGHMRH) is disordered. The SH3-binding signature appears at 709–716 (PKLPPPKP). At T720 the chain carries Phosphothreonine. Residues 723-729 (RRRPPQT) carry the SH3-binding motif.

Requires Zn(2+) as cofactor. In terms of processing, the precursor is cleaved by furin and PCSK7.

It is found in the membrane. The catalysed reaction is Endopeptidase of broad specificity.. In terms of biological role, controls the proteolytic processing of Notch and mediates lateral inhibition during neurogenesis. This chain is Disintegrin and metalloproteinase domain-containing protein 10 (adam10), found in Xenopus laevis (African clawed frog).